A 263-amino-acid polypeptide reads, in one-letter code: Protein maestro (263 aa).

The interval 1-21 is disordered; that stretch reads MDQTPRRMLGQPLSSPATQPK. An HEAT repeat occupies 128–163; the sequence is SFFIDITLQTRTLLDDENDSLRYSAFVLFGQLADLA.

It localises to the nucleus. Its subcellular location is the nucleolus. This is Protein maestro (MRO) from Bos taurus (Bovine).